A 2458-amino-acid polypeptide reads, in one-letter code: Acetyl-CoA carboxylase 2 (2458 aa).

Position 35 is a phosphoserine (S35). Residues 35–155 (SKSEANLIPS…SPSKEDKKQA (121 aa)) are disordered. Residues 51–60 (SDNSGETPQR) are compositionally biased toward polar residues. Phosphothreonine is present on T70. Basic and acidic residues predominate over residues 77–87 (ASHKGPKDAGR). Residues S91 and S95 each carry the phosphoserine modification. The segment covering 103-146 (PLSSSDAAPSPELQANGTGTQGLEATDTNGLSSSARPQGQQAGS) has biased composition (polar residues). 5 positions are modified to phosphoserine: S169, S175, S192, S195, and S200. Residues 174–193 (SSDEDSVAGSSRESTRKGSR) form a disordered region. Phosphothreonine is present on T207. S220 carries the post-translational modification Phosphoserine. S222 carries the post-translational modification Phosphoserine; by AMPK. The region spanning 259 to 761 (VIEKVLIANN…DTGWLDYLIA (503 aa)) is the Biotin carboxylation domain. Residues 414-609 (DDLQQGKRIS…LPAAQLQIAM (196 aa)) form the ATP-grasp domain. 458–463 (GGGGKG) provides a ligand contact to ATP. S469 bears the Phosphoserine mark. Mg(2+) contacts are provided by E567, E580, and N582. Residues E567, E580, and N582 each coordinate Mn(2+). The active site involves R584. Residue T753 is modified to Phosphothreonine. The Biotinyl-binding domain maps to 888–962 (FEKENDPTVL…EAGCVVARLE (75 aa)). Residue K929 is modified to N6-biotinyllysine. Position 1340 is a phosphoserine (S1340). T1342 bears the Phosphothreonine mark. Residues S1360 and S1405 each carry the phosphoserine modification. Residues 1695-2025 (PYVTKDLLQA…DNHSPVPIIT (331 aa)) form the CoA carboxyltransferase N-terminal domain. The interval 1695–2345 (PYVTKDLLQA…EDQVKQEILQ (651 aa)) is carboxyltransferase. Positions 1934, 2238, and 2240 each coordinate CoA. Residues 2029–2345 (PIDREIEFLP…EDQVKQEILQ (317 aa)) form the CoA carboxyltransferase C-terminal domain.

Monomer, homodimer, and homotetramer. Forms filamentous polymers. Interacts with MID1IP1; interaction with MID1IP1 promotes oligomerization and increases its activity in a citrate-dependent manner. Requires biotin as cofactor. It depends on Mg(2+) as a cofactor. Mn(2+) is required as a cofactor. In terms of processing, the biotin cofactor is covalently attached to the central biotinyl-binding domain and is required for the catalytic activity. Post-translationally, phosphorylation at Ser-222 by AMPK inactivates the enzyme. Required for the maintenance of skeletal muscle lipid and glucose homeostasis. Widely expressed with highest levels in heart, skeletal muscle, liver, adipose tissue, mammary gland, adrenal gland and colon. Isoform 3 is expressed in skeletal muscle, adipose tissue and liver (at protein level). Isoform 3 is detected at high levels in adipose tissue with lower levels in heart, liver, skeletal muscle and testis.

It is found in the mitochondrion. The enzyme catalyses hydrogencarbonate + acetyl-CoA + ATP = malonyl-CoA + ADP + phosphate + H(+). Its pathway is lipid metabolism; malonyl-CoA biosynthesis; malonyl-CoA from acetyl-CoA: step 1/1. Activity is increased by oligomerization of the protein into filaments. The oligomerization and the activity of the enzyme are inhibited by phosphorylation at Ser-222. Inhibited by its product, malonyl-CoA. Activated by citrate. Activation by MID1IP1 is citrate-dependent. Soraphen A, inhibits the enzyme by preventing the formation of active filamentous oligomers. Its function is as follows. Mitochondrial enzyme that catalyzes the carboxylation of acetyl-CoA to malonyl-CoA and plays a central role in fatty acid metabolism. Catalyzes a 2 steps reaction starting with the ATP-dependent carboxylation of the biotin carried by the biotin carboxyl carrier (BCC) domain followed by the transfer of the carboxyl group from carboxylated biotin to acetyl-CoA. Through the production of malonyl-CoA that allosterically inhibits carnitine palmitoyltransferase 1 at the mitochondria, negatively regulates fatty acid oxidation. Together with its cytosolic isozyme ACACA, which is involved in de novo fatty acid biosynthesis, promotes lipid storage. In Homo sapiens (Human), this protein is Acetyl-CoA carboxylase 2.